A 252-amino-acid polypeptide reads, in one-letter code: Secreted LysM effector LysM1 (252 aa).

The LysM 1 domain occupies phenylalanine 20 to valine 64. The disordered stretch occupies residues aspartate 71–alanine 98. Over residues threonine 72–alanine 98 the composition is skewed to low complexity. LysM domains are found at residues lysine 126 to valine 172 and lysine 204 to isoleucine 250.

It belongs to the secreted LysM effector family.

The protein resides in the secreted. It is found in the cell wall. Secreted effector that binds two substrates, chitin and N-linked oligosaccharides associated with human skin glycoproteins. Could provide the pathogen with three important functions including shielding host cell wall chitin from the human immune system, shielding the pathogen's glycoproteins from host degradation and immune surveillance, and helping facilitate pathogen adhesion to human skin. The polypeptide is Secreted LysM effector LysM1 (Trichophyton rubrum (strain ATCC MYA-4607 / CBS 118892) (Athlete's foot fungus)).